The sequence spans 416 residues: Phosphoglycerate kinase (416 aa).

Positions 23, 24, 25, 26, 39, 62, 63, 65, 66, 121, 122, 169, and 170 each coordinate (2R)-3-phosphoglycerate. Glycine 213 is an ADP binding site. Glycine 213 serves as a coordination point for CDP. AMP-binding residues include alanine 214 and lysine 215. Alanine 214 serves as a coordination point for ATP. A Mg(2+)-binding site is contributed by alanine 214. Aspartate 218 contacts CDP. Residue aspartate 218 coordinates Mg(2+). An AMP-binding site is contributed by lysine 219. Lysine 219 is an ATP binding site. Glycine 237 contributes to the ADP binding site. Position 237 (glycine 237) interacts with CDP. Residues glycine 238 and glycine 312 each contribute to the AMP site. Residues glycine 238 and glycine 312 each coordinate ATP. Residues glycine 337 and phenylalanine 342 each contribute to the CDP site. Phenylalanine 342 is a binding site for ADP. Residue glutamate 343 coordinates AMP. Residues glutamate 343, aspartate 374, and threonine 375 each coordinate ATP. Aspartate 374 contributes to the Mg(2+) binding site.

It belongs to the phosphoglycerate kinase family. In terms of assembly, monomer. It depends on Mg(2+) as a cofactor.

It localises to the cytoplasm. The protein localises to the mitochondrion. It catalyses the reaction (2R)-3-phosphoglycerate + ATP = (2R)-3-phospho-glyceroyl phosphate + ADP. The protein operates within carbohydrate degradation; glycolysis; pyruvate from D-glyceraldehyde 3-phosphate: step 2/5. Catalyzes one of the two ATP producing reactions in the glycolytic pathway via the reversible conversion of 1,3-diphosphoglycerate to 3-phosphoglycerate. Both L- and D- forms of purine and pyrimidine nucleotides can be used as substrates, but the activity is much lower on pyrimidines. Negatively regulates the biosynthesis of acetyl-CoA from pyruvate in the mitochondrion. This chain is Phosphoglycerate kinase (pgkA), found in Agaricus bisporus (White button mushroom).